We begin with the raw amino-acid sequence, 890 residues long: DNA mismatch repair protein MutS (890 aa).

G634–S641 serves as a coordination point for ATP.

This sequence belongs to the DNA mismatch repair MutS family.

Functionally, this protein is involved in the repair of mismatches in DNA. It is possible that it carries out the mismatch recognition step. This protein has a weak ATPase activity. This Burkholderia pseudomallei (strain K96243) protein is DNA mismatch repair protein MutS.